A 135-amino-acid polypeptide reads, in one-letter code: Small ribosomal subunit protein uS12 (135 aa).

Residues 1–20 (MPTINQLVRKGRHSKVTKSK) form a disordered region. Positions 9–18 (RKGRHSKVTK) are enriched in basic residues. Asp102 is modified (3-methylthioaspartic acid).

It belongs to the universal ribosomal protein uS12 family. Part of the 30S ribosomal subunit. Contacts proteins S8 and S17. May interact with IF1 in the 30S initiation complex.

In terms of biological role, with S4 and S5 plays an important role in translational accuracy. Interacts with and stabilizes bases of the 16S rRNA that are involved in tRNA selection in the A site and with the mRNA backbone. Located at the interface of the 30S and 50S subunits, it traverses the body of the 30S subunit contacting proteins on the other side and probably holding the rRNA structure together. The combined cluster of proteins S8, S12 and S17 appears to hold together the shoulder and platform of the 30S subunit. This is Small ribosomal subunit protein uS12 from Lactobacillus helveticus (strain DPC 4571).